The primary structure comprises 60 residues: Large ribosomal subunit protein bL32 (60 aa).

Belongs to the bacterial ribosomal protein bL32 family.

In Clostridium novyi (strain NT), this protein is Large ribosomal subunit protein bL32.